The primary structure comprises 351 residues: UDP-N-acetylglucosamine--N-acetylmuramyl-(pentapeptide) pyrophosphoryl-undecaprenol N-acetylglucosamine transferase (351 aa).

UDP-N-acetyl-alpha-D-glucosamine is bound by residues 12–14 (TGG), N124, R160, S188, I239, 258–263 (ALTVCE), and Q283.

Belongs to the glycosyltransferase 28 family. MurG subfamily.

It is found in the cell inner membrane. The enzyme catalyses di-trans,octa-cis-undecaprenyl diphospho-N-acetyl-alpha-D-muramoyl-L-alanyl-D-glutamyl-meso-2,6-diaminopimeloyl-D-alanyl-D-alanine + UDP-N-acetyl-alpha-D-glucosamine = di-trans,octa-cis-undecaprenyl diphospho-[N-acetyl-alpha-D-glucosaminyl-(1-&gt;4)]-N-acetyl-alpha-D-muramoyl-L-alanyl-D-glutamyl-meso-2,6-diaminopimeloyl-D-alanyl-D-alanine + UDP + H(+). It participates in cell wall biogenesis; peptidoglycan biosynthesis. In terms of biological role, cell wall formation. Catalyzes the transfer of a GlcNAc subunit on undecaprenyl-pyrophosphoryl-MurNAc-pentapeptide (lipid intermediate I) to form undecaprenyl-pyrophosphoryl-MurNAc-(pentapeptide)GlcNAc (lipid intermediate II). The sequence is that of UDP-N-acetylglucosamine--N-acetylmuramyl-(pentapeptide) pyrophosphoryl-undecaprenol N-acetylglucosamine transferase from Actinobacillus pleuropneumoniae serotype 5b (strain L20).